The following is a 3414-amino-acid chain: Genome polyprotein (3414 aa).

Residues 1 to 27 are disordered; it reads MAGKAVLKGKGGGPPRRASKVAPKKTR. Over 1–98 the chain is Cytoplasmic; that stretch reads MAGKAVLKGK…LHRRGSRRTT (98 aa). Residues 17–27 are compositionally biased toward basic residues; that stretch reads RASKVAPKKTR. Positions 97–117 are cleaved as a propeptide — ER anchor for the capsid protein C, removed in mature form by serine protease NS3; that stretch reads TTIDWMTPLLITVMLGMCLTA. Residues 99–117 form a helical membrane-spanning segment; the sequence is IDWMTPLLITVMLGMCLTA. Over 118 to 242 the chain is Extracellular; sequence TVRRERDGSM…HLTRVEGWVW (125 aa). A glycan (N-linked (GlcNAc...) asparagine; by host) is linked at Asn-144. A helical membrane pass occupies residues 243-260; the sequence is KNKLFTLSLVMVAWLMVD. A topological domain (cytoplasmic) is located at residue Gly-261. A helical membrane pass occupies residues 262 to 280; the sequence is LLPRILIVVVALALVPAYA. Over 281-727 the chain is Extracellular; that stretch reads SRCTHLENRD…HTVLGGAFNT (447 aa). 6 disulfide bridges follow: Cys-283–Cys-310, Cys-340–Cys-396, Cys-340–Cys-401, Cys-354–Cys-385, Cys-372–Cys-396, and Cys-372–Cys-401. The tract at residues 378-391 is fusion peptide; sequence DRGWGNHCGLFGKG. The N-linked (GlcNAc...) asparagine; by host glycan is linked to Asn-434. 2 cysteine pairs are disulfide-bonded: Cys-466/Cys-570 and Cys-587/Cys-618. Residues 728–748 traverse the membrane as a helical segment; the sequence is LLGGVGFLPKILLGVAMAWLG. At 749–755 the chain is on the cytoplasmic side; sequence LNMRNPT. Residues 756-776 form a helical membrane-spanning segment; it reads LSMGFLLSGGLVLAMTLGVGA. The Extracellular segment spans residues 777-1187; the sequence is DVGCAVDTER…LVSVESLFRY (411 aa). Cystine bridges form between Cys-780–Cys-791, Cys-831–Cys-920, Cys-955–Cys-1000, Cys-1057–Cys-1106, Cys-1068–Cys-1090, and Cys-1089–Cys-1093. N-linked (GlcNAc...) asparagine; by host glycans are attached at residues Asn-861, Asn-983, and Asn-999. A helical membrane pass occupies residues 1188 to 1208; sequence LVAVGLVFQLELGPEAVAMVL. Topologically, residues 1209-1232 are cytoplasmic; that stretch reads LQAVFEMRTCLLSGFVLRRSITTR. A helical membrane pass occupies residues 1233–1253; that stretch reads EIVTVYFLLLVLEMGIPVKGL. Residues 1254-1267 lie on the Lumenal side of the membrane; that stretch reads EHLWRWTDALAMGA. The helical transmembrane segment at 1268–1288 threads the bilayer; the sequence is IIFRACTAEGKTGIGLLLAAF. Over 1289–1300 the chain is Cytoplasmic; it reads MTQSDMNIIHDG. A helical transmembrane segment spans residues 1301 to 1319; that stretch reads LTAFLCVATTMAIWRYIRG. Residues 1320 to 1325 are Lumenal-facing; the sequence is QGERKG. Residues 1326–1346 form a helical membrane-spanning segment; sequence LTWIVPLAGILGGEGSGVRLL. The Cytoplasmic segment spans residues 1347–1359; sequence AFWELAASRGRRS. The chain crosses the membrane as a helical span at residues 1360–1378; the sequence is FNEPMTVIGVMLTLASGMM. Residues 1379-1382 are Lumenal-facing; the sequence is RHTS. Residues 1383-1403 form a helical membrane-spanning segment; sequence QEAVCAMALAAFLLLMLTLGT. The Cytoplasmic portion of the chain corresponds to 1404–1454; it reads RKMQLLAEWSGNIEWNPELTSEGGEVSLRVRQDALGNLHLTELEKEERMMA. Positions 1410–1449 are interacts with and activates NS3 protease; sequence AEWSGNIEWNPELTSEGGEVSLRVRQDALGNLHLTELEKE. The segment at residues 1455–1475 is an intramembrane region (helical); the sequence is FWLVVGLIASAFHWSGILIVM. The Cytoplasmic portion of the chain corresponds to 1476–2160; the sequence is GLWTISEMLG…RIGERDAPEA (685 aa). Residues 1490–1669 form the Peptidase S7 domain; that stretch reads TDLVFSGCSE…EVEKSRPNLP (180 aa). Catalysis depends on charge relay system; for serine protease NS3 activity residues His-1543, Asp-1567, and Ser-1627. Residues 1675–1831 enclose the Helicase ATP-binding domain; that stretch reads TGWTAKGQIT…ESNGAIASEE (157 aa). 1688-1695 lines the ATP pocket; it reads MHPGSGKT. Residues 1779 to 1782 carry the DEAH box motif; it reads DEAH. Residues 1841 to 2000 enclose the Helicase C-terminal domain; it reads DGFDWITEYE…TARGPVATFY (160 aa). N6-acetyllysine; by host is present on Lys-1883. The chain crosses the membrane as a helical span at residues 2161–2181; that stretch reads FLTAVEMLVLGLATLGVVWCF. At 2182–2189 the chain is on the lumenal side; it reads VVRTSVSR. The helical intramembrane region spans 2190–2209; it reads MVLGTLVLATSLIFLWAGGV. Residue Gly-2210 is a topological domain, lumenal. A helical membrane pass occupies residues 2211 to 2231; sequence YGNMAGVALVFYTLLTVLQPE. Residues 2232–2238 are Cytoplasmic-facing; the sequence is TGKQRSS. A helical membrane pass occupies residues 2239–2259; sequence DDNKLAYFLLTLCGLAGMVAA. Over 2260–2296 the chain is Lumenal; that stretch reads NEMGLLEKTKADLAALFARDQGETVRWGEWTNLDIQP. Residues 2297–2315 constitute an intramembrane region (helical); the sequence is ARSWGTYVLVVSLFTPYML. Over 2316 to 2343 the chain is Lumenal; it reads HQLQTRIQQLVNSAVASGAQAMRDLGGG. Residues 2344–2364 constitute an intramembrane region (helical); the sequence is TPFFGVAGHVLALGVASLVGA. The Lumenal portion of the chain corresponds to 2365-2368; that stretch reads TPTS. Residues 2369-2389 form a helical membrane-spanning segment; the sequence is LILGVGLAAFHLAIVVSGLEA. The Cytoplasmic portion of the chain corresponds to 2390-2432; that stretch reads ELTQRAHKVFFSAMVRNPMVDGDVINPFGDGEAKPALYERKLS. The chain crosses the membrane as a helical span at residues 2433–2453; it reads LILALVLCLASVVMNRTFVAV. Over 2454 to 2477 the chain is Lumenal; it reads TEAGAVGVAAAMQLLRPEMDVLWT. The helical transmembrane segment at 2478 to 2498 threads the bilayer; the sequence is MPVACGMSGVVRGSLWGLLPL. Topologically, residues 2499–3414 are cytoplasmic; sequence GHRLWLRTTG…WELKLESSIF (916 aa). An mRNA cap 0-1 NS5-type MT domain is found at 2512–2776; it reads GGSEGDTLGD…EIDLGVGTRS (265 aa). Residue Ser-2567 coordinates S-adenosyl-L-methionine. Residue Ser-2567 is modified to Phosphoserine. Residue Lys-2572 is the For 2'-O-MTase activity of the active site. 6 residues coordinate S-adenosyl-L-methionine: Gly-2597, Trp-2598, Thr-2615, Ile-2616, Asp-2642, and Val-2643. Asp-2657 functions as the For 2'-O-MTase activity in the catalytic mechanism. Ile-2658 contributes to the S-adenosyl-L-methionine binding site. Residues Lys-2694 and Glu-2730 each act as for 2'-O-MTase activity in the active site. The segment at 2730–2734 is interaction with host SCRIB; the sequence is EMYFS. Tyr-2732 serves as a coordination point for S-adenosyl-L-methionine. 4 residues coordinate Zn(2+): Glu-2950, His-2954, Cys-2959, and Cys-2962. Positions 3040–3189 constitute a RdRp catalytic domain; the sequence is GLFYADDTAG…RPVDDRFSKA (150 aa). Residues His-3224, Cys-3240, and Cys-3359 each contribute to the Zn(2+) site.

This sequence in the N-terminal section; belongs to the class I-like SAM-binding methyltransferase superfamily. mRNA cap 0-1 NS5-type methyltransferase family. In terms of assembly, homodimer. Interacts (via N-terminus) with host EXOC1 (via C-terminus); this interaction results in EXOC1 degradation through the proteasome degradation pathway. As to quaternary structure, forms heterodimers with envelope protein E in the endoplasmic reticulum and Golgi. Homodimer; in the endoplasmic reticulum and Golgi. Interacts with protein prM. Interacts with non-structural protein 1. In terms of assembly, homodimer; Homohexamer when secreted. Interacts with envelope protein E. As to quaternary structure, interacts (via N-terminus) with serine protease NS3. Forms a heterodimer with serine protease NS3. May form homooligomers. In terms of assembly, forms a heterodimer with NS2B. Interacts with non-structural protein 2A (via N-terminus). Interacts with NS4B. Interacts with unphosphorylated RNA-directed RNA polymerase NS5; this interaction stimulates RNA-directed RNA polymerase NS5 guanylyltransferase activity. As to quaternary structure, interacts with serine protease NS3. Interacts with NS1. Homodimer. Interacts with host STAT2; this interaction inhibits the phosphorylation of the latter, and, when all viral proteins are present (polyprotein), targets STAT2 for degradation. Interacts with serine protease NS3. Interacts with host SCRIB; this interaction targets NS5 to the cell membrane periphery and nucleus, thereby allowing efficient host nuclear STAT1 inhibition. Specific enzymatic cleavages in vivo yield mature proteins. Cleavages in the lumen of endoplasmic reticulum are performed by host signal peptidase, whereas cleavages in the cytoplasmic side are performed by serine protease NS3. Signal cleavage at the 2K-4B site requires a prior NS3 protease-mediated cleavage at the 4A-2K site. In terms of processing, cleaved in post-Golgi vesicles by a host furin, releasing the mature small envelope protein M, and peptide pr. This cleavage is incomplete as up to 30% of viral particles still carry uncleaved prM. Post-translationally, N-glycosylated. N-glycosylated. The excreted form is glycosylated and this is required for efficient secretion of the protein from infected cells. In terms of processing, acetylated by host KAT5. Acetylation modulates NS3 RNA-binding and unwinding activities and plays an important positive role for viral replication. Post-translationally, phosphorylated on serines residues. This phosphorylation may trigger NS5 nuclear localization.

The protein resides in the virion. It localises to the host nucleus. The protein localises to the host cytoplasm. It is found in the host perinuclear region. Its subcellular location is the secreted. The protein resides in the virion membrane. It localises to the host endoplasmic reticulum membrane. It catalyses the reaction Selective hydrolysis of -Xaa-Xaa-|-Yaa- bonds in which each of the Xaa can be either Arg or Lys and Yaa can be either Ser or Ala.. It carries out the reaction RNA(n) + a ribonucleoside 5'-triphosphate = RNA(n+1) + diphosphate. The enzyme catalyses a ribonucleoside 5'-triphosphate + H2O = a ribonucleoside 5'-diphosphate + phosphate + H(+). The catalysed reaction is ATP + H2O = ADP + phosphate + H(+). It catalyses the reaction a 5'-end (5'-triphosphoguanosine)-ribonucleoside in mRNA + S-adenosyl-L-methionine = a 5'-end (N(7)-methyl 5'-triphosphoguanosine)-ribonucleoside in mRNA + S-adenosyl-L-homocysteine. It carries out the reaction a 5'-end (N(7)-methyl 5'-triphosphoguanosine)-ribonucleoside in mRNA + S-adenosyl-L-methionine = a 5'-end (N(7)-methyl 5'-triphosphoguanosine)-(2'-O-methyl-ribonucleoside) in mRNA + S-adenosyl-L-homocysteine + H(+). Functionally, plays a role in virus budding by binding to membrane and gathering the viral RNA into a nucleocapsid that forms the core of a mature virus particle. During virus entry, may induce genome penetration in host cytoplasm after hemifusion induced by surface proteins. Can migrate to the cell nucleus where it modulates host functions. Its function is as follows. Inhibits RNA silencing by interfering with host Dicer. Prevents premature fusion activity of envelope proteins in trans-Golgi by binding to envelope protein E at pH6.0. After virion release in extracellular space gets dissociated from E dimers. In terms of biological role, acts as a chaperone for envelope protein E during intracellular virion assembly by masking and inactivating envelope protein E fusion peptide. prM is the only viral peptide matured by host furin in the trans-Golgi network. Presumably to avoid catastrophic activation of the viral fusion activity in acidic GolGi compartment prior to virion release. prM-E cleavage is ineficient, and many virions are only partially matured. These uncleaved prM would play a role in immune evasion. Functionally, may play a role in virus budding. Exerts cytotoxic effects by activating a mitochondrial apoptotic pathway through M extodomain. May display a viroporin activity. Its function is as follows. Binds to host cell surface receptor and mediates fusion between viral and cellular membranes. Envelope protein is synthesized in the endoplasmic reticulum in the form of heterodimer with protein prM. They play a role in virion budding in the ER, and the newly formed immature particle is covered with 60 spikes composed of heterodimer between precursor prM and envelope protein E. The virion is transported to the Golgi apparatus where the low pH causes dissociation of PrM-E heterodimers and formation of E homodimers. prM-E cleavage is ineficient, and many virions are only partially matured. These uncleaved prM would play a role in immune evasion. Involved in immune evasion, pathogenesis and viral replication. Once cleaved off the polyprotein, is targeted to three destinations: the viral replication cycle, the plasma membrane and the extracellular compartment. Essential for viral replication. Required for formation of the replication complex and recruitment of other non-structural proteins to the ER-derived membrane structures. Excreted as a hexameric lipoparticle that plays a role against host immune response. Antagonizing the complement function. Binds to the host macrophages and dendritic cells. Inhibits signal transduction originating from Toll-like receptor 3 (TLR3). In terms of biological role, component of the viral RNA replication complex that functions in virion assembly and antagonizes the host immune response. Functionally, required cofactor for the serine protease function of NS3. May have membrane-destabilizing activity and form viroporins. Its function is as follows. Displays three enzymatic activities: serine protease, NTPase and RNA helicase. NS3 serine protease, in association with NS2B, performs its autocleavage and cleaves the polyprotein at dibasic sites in the cytoplasm: C-prM, NS2A-NS2B, NS2B-NS3, NS3-NS4A, NS4A-2K and NS4B-NS5. NS3 RNA helicase binds RNA and unwinds dsRNA in the 3' to 5' direction. Regulates the ATPase activity of the NS3 helicase activity. NS4A allows NS3 helicase to conserve energy during unwinding. In terms of biological role, functions as a signal peptide for NS4B and is required for the interferon antagonism activity of the latter. Functionally, induces the formation of ER-derived membrane vesicles where the viral replication takes place. Inhibits interferon (IFN)-induced host STAT1 phosphorylation and nuclear translocation, thereby preventing the establishment of cellular antiviral state by blocking the IFN-alpha/beta pathway. Inhibits STAT2 translocation in the nucleus after IFN-alpha treatment. Its function is as follows. Replicates the viral (+) and (-) genome, and performs the capping of genomes in the cytoplasm. NS5 methylates viral RNA cap at guanine N-7 and ribose 2'-O positions. Besides its role in genome replication, also prevents the establishment of cellular antiviral state by blocking the interferon-alpha/beta (IFN-alpha/beta) signaling pathway. Inhibits host TYK2 and STAT2 phosphorylation, thereby preventing activation of JAK-STAT signaling pathway. This Homo sapiens (Human) protein is Genome polyprotein.